Consider the following 1641-residue polypeptide: Alpha-2-macroglobulin (1641 aa).

An N-terminal signal peptide occupies residues 1–31; that stretch reads MRDRVAMMLRPLVRGWIPRAVLLLTVAFSFG. Residue Cys32 is the site of N-palmitoyl cysteine attachment. Residue Cys32 is the site of S-diacylglycerol cysteine attachment. Residues 1166–1169 constitute a cross-link (isoglutamyl cysteine thioester (Cys-Gln)); the sequence is CAEQ.

This sequence belongs to the protease inhibitor I39 (alpha-2-macroglobulin) family. Bacterial alpha-2-macroglobulin subfamily.

It is found in the cell membrane. Protects the bacterial cell from host peptidases. This Xylella fastidiosa (strain Temecula1 / ATCC 700964) protein is Alpha-2-macroglobulin.